The chain runs to 155 residues: MSRRGTAEEKTAKSDPIYRNRLVNMLVNRILKHGKKSLAYQIIYRAVKKIQQKTETNPLSVLRQAIRGVTPNIAVKARRVGGSTHQVPIEIGSTQGKALAIRWLLGASRKRPGRNMAFKLSSELVDAAKGSGDAIRKKEETHRMAEANRAFAHFR.

It belongs to the universal ribosomal protein uS7 family. As to quaternary structure, part of the 30S ribosomal subunit.

Its subcellular location is the plastid. The protein resides in the chloroplast. One of the primary rRNA binding proteins, it binds directly to 16S rRNA where it nucleates assembly of the head domain of the 30S subunit. This Cabomba caroliniana (Carolina fanwort) protein is Small ribosomal subunit protein uS7c (rps7).